The chain runs to 387 residues: Protochlorophyllide reductase A, chloroplastic (387 aa).

The N-terminal 35 residues, 1 to 35 (MALQVQAALLPSALSVPKKGNLSAVVKEPGFLSVS), are a transit peptide targeting the chloroplast.

This sequence belongs to the short-chain dehydrogenases/reductases (SDR) family. POR subfamily.

Its subcellular location is the plastid. The protein resides in the chloroplast. It carries out the reaction chlorophyllide a + NADP(+) = protochlorophyllide a + NADPH + H(+). It participates in porphyrin-containing compound metabolism; chlorophyll biosynthesis. In terms of biological role, phototransformation of protochlorophyllide (Pchlide) to chlorophyllide (Chlide). This is Protochlorophyllide reductase A, chloroplastic (PORA) from Oryza sativa subsp. japonica (Rice).